We begin with the raw amino-acid sequence, 252 residues long: Triosephosphate isomerase (252 aa).

10 to 12 (NWK) provides a ligand contact to substrate. His96 acts as the Electrophile in catalysis. The Proton acceptor role is filled by Glu168. Residues Gly174, Ser214, and 235–236 (GG) contribute to the substrate site.

It belongs to the triosephosphate isomerase family. As to quaternary structure, homodimer.

It localises to the cytoplasm. It carries out the reaction D-glyceraldehyde 3-phosphate = dihydroxyacetone phosphate. Its pathway is carbohydrate biosynthesis; gluconeogenesis. It participates in carbohydrate degradation; glycolysis; D-glyceraldehyde 3-phosphate from glycerone phosphate: step 1/1. Seems to be capable of enhancing bacteriocin synthesis. In terms of biological role, involved in the gluconeogenesis. Catalyzes stereospecifically the conversion of dihydroxyacetone phosphate (DHAP) to D-glyceraldehyde-3-phosphate (G3P). The polypeptide is Triosephosphate isomerase (Lactobacillus delbrueckii subsp. lactis).